The sequence spans 422 residues: Proline--tRNA ligase (422 aa).

Belongs to the class-II aminoacyl-tRNA synthetase family. ProS type 2 subfamily. As to quaternary structure, homodimer.

The protein localises to the cytoplasm. The enzyme catalyses tRNA(Pro) + L-proline + ATP = L-prolyl-tRNA(Pro) + AMP + diphosphate. Functionally, catalyzes the attachment of proline to tRNA(Pro) in a two-step reaction: proline is first activated by ATP to form Pro-AMP and then transferred to the acceptor end of tRNA(Pro). In Wolbachia sp. subsp. Drosophila simulans (strain wRi), this protein is Proline--tRNA ligase.